A 1706-amino-acid chain; its full sequence is Brefeldin A-inhibited guanine nucleotide-exchange protein 4 (1706 aa).

Residues 555–742 (MLEQRRAYKI…GSLYDRVVKE (188 aa)) form the SEC7 domain. E657 is an active-site residue.

Homodimer.

It is found in the cytoplasm. It localises to the cytosol. The protein localises to the membrane. Its activity is regulated as follows. Inhibited by brefeldin A. Its function is as follows. Activates the ARF proteins by exchanging bound GDP for free GTP. Plays a role in vesicular protein sorting. In Arabidopsis thaliana (Mouse-ear cress), this protein is Brefeldin A-inhibited guanine nucleotide-exchange protein 4 (BIG4).